An 858-amino-acid chain; its full sequence is Elongation factor 2 (858 aa).

In terms of domain architecture, tr-type G spans 17–362 (ANIRNMSVIA…MITIHLPSPV (346 aa)). 26-33 (AHVDHGKS) is a GTP binding site. Thr-54 is modified (phosphothreonine). Thr-57 is subject to Phosphothreonine; by EEF2K. Thr-59 is subject to Phosphothreonine. Lys-152 is subject to N6-succinyllysine. GTP contacts are provided by residues 158–161 (NKMD) and 216–218 (SGL). At Lys-235 the chain carries N6-acetyllysine. Residue Lys-239 is modified to N6-acetyllysine; alternate. Lys-239 is covalently cross-linked (Glycyl lysine isopeptide (Lys-Gly) (interchain with G-Cter in SUMO1); alternate). Tyr-265 bears the Phosphotyrosine; by CSK mark. Residue Lys-272 is modified to N6-acetyllysine; alternate. The residue at position 272 (Lys-272) is an N6-succinyllysine; alternate. An N6-acetyllysine modification is found at Lys-275. A Glycyl lysine isopeptide (Lys-Gly) (interchain with G-Cter in SUMO) cross-link involves residue Lys-322. At Ser-325 the chain carries Phosphoserine. The residue at position 373 (Tyr-373) is a Phosphotyrosine; by CSK. Position 435 is a phosphothreonine (Thr-435). N6-acetyllysine occurs at positions 439 and 445. Ser-502 carries the post-translational modification Phosphoserine. Lys-525 bears the N6,N6,N6-trimethyllysine; by EEF2KMT mark. Lys-529 is covalently cross-linked (Glycyl lysine isopeptide (Lys-Gly) (interchain with G-Cter in SUMO)). N6-succinyllysine is present on Lys-572. The residue at position 595 (Ser-595) is a Phosphoserine; by CDK2. Residue Lys-619 is modified to N6-acetyllysine. The residue at position 715 (His-715) is a Diphthamide.

It belongs to the TRAFAC class translation factor GTPase superfamily. Classic translation factor GTPase family. EF-G/EF-2 subfamily. Binds to 80S ribosomes. Actively translating ribosomes show mutually exclusive binding of eIF5a (EIF5A or EIF5A2) and EEF2/eEF2. Interacts with SERBP1; interaction sequesters EEF2/eEF2 at the A-site of the ribosome, thereby blocking the interaction sites of the mRNA-tRNA complex, promoting ribosome stabilization and hibernation. Interacts with HABP4; interaction takes place at the A-site of hibernating ribosomes and promotes ribosome stabilization. Component of the mRNA surveillance SURF complex, at least composed of ERF1, ERF3 (ERF3A or ERF3B), EEF2, UPF1/RENT1, SMG1, SMG8 and SMG9. Interacts with RBPMS2. In terms of processing, phosphorylation by EF-2 kinase completely inactivates EF-2; it requires prior phosphorylation by CDK2 at Ser-595 during mitotic prometaphase. Phosphorylation by CSK promotes SUMOylation, proteolytic cleavage, and nuclear translocation if the C-terminal fragment. Diphthamide is 2-[3-carboxyamido-3-(trimethyl-ammonio)propyl]histidine. Post-translationally, ISGylated. In terms of processing, proteolytically processed at two sites following phosphorylation by CSK. SUMOylated following phosphorylation by CSK, promotes proteolytic cleavage.

It is found in the cytoplasm. It localises to the nucleus. It catalyses the reaction GTP + H2O = GDP + phosphate + H(+). Functionally, catalyzes the GTP-dependent ribosomal translocation step during translation elongation. During this step, the ribosome changes from the pre-translocational (PRE) to the post-translocational (POST) state as the newly formed A-site-bound peptidyl-tRNA and P-site-bound deacylated tRNA move to the P and E sites, respectively. Catalyzes the coordinated movement of the two tRNA molecules, the mRNA and conformational changes in the ribosome. This is Elongation factor 2 (Eef2) from Mus musculus (Mouse).